A 109-amino-acid chain; its full sequence is Cell division protein ZapA (109 aa).

The stretch at 22–99 forms a coiled coil; the sequence is EQQDALNMAA…IEQALLEQGR (78 aa).

It belongs to the ZapA family. Type 1 subfamily. In terms of assembly, homodimer. Interacts with FtsZ.

Its subcellular location is the cytoplasm. Activator of cell division through the inhibition of FtsZ GTPase activity, therefore promoting FtsZ assembly into bundles of protofilaments necessary for the formation of the division Z ring. It is recruited early at mid-cell but it is not essential for cell division. This chain is Cell division protein ZapA, found in Yersinia pseudotuberculosis serotype O:1b (strain IP 31758).